Consider the following 219-residue polypeptide: Cytidylate kinase (219 aa).

Residue 15–23 (GPAASGKGT) participates in ATP binding.

Belongs to the cytidylate kinase family. Type 1 subfamily.

The protein resides in the cytoplasm. It catalyses the reaction CMP + ATP = CDP + ADP. The catalysed reaction is dCMP + ATP = dCDP + ADP. In Brucella melitensis biotype 2 (strain ATCC 23457), this protein is Cytidylate kinase.